A 146-amino-acid polypeptide reads, in one-letter code: Large ribosomal subunit protein uL15 (146 aa).

The segment at 1-51 is disordered; that stretch reads MQLNTIKPAEGSKKNRRHVGRGIGSGLGKTAGRGHKGQKSRSGGFHKVGFE. The segment covering 21–31 has biased composition (gly residues); sequence RGIGSGLGKTA.

This sequence belongs to the universal ribosomal protein uL15 family. Part of the 50S ribosomal subunit.

Its function is as follows. Binds to the 23S rRNA. The protein is Large ribosomal subunit protein uL15 of Polynucleobacter necessarius subsp. necessarius (strain STIR1).